We begin with the raw amino-acid sequence, 501 residues long: Glutamate--tRNA ligase (501 aa).

The 'HIGH' region motif lies at 11–21 (PSPTGFLHIGN). A 'KMSKS' region motif is present at residues 257-261 (KLSKR). Residue Lys260 participates in ATP binding.

The protein belongs to the class-I aminoacyl-tRNA synthetase family. Glutamate--tRNA ligase type 1 subfamily. Monomer.

The protein resides in the cytoplasm. It catalyses the reaction tRNA(Glu) + L-glutamate + ATP = L-glutamyl-tRNA(Glu) + AMP + diphosphate. Catalyzes the attachment of glutamate to tRNA(Glu) in a two-step reaction: glutamate is first activated by ATP to form Glu-AMP and then transferred to the acceptor end of tRNA(Glu). The protein is Glutamate--tRNA ligase of Limosilactobacillus reuteri subsp. reuteri (strain JCM 1112) (Lactobacillus reuteri).